The following is a 460-amino-acid chain: ATP synthase subunit beta (460 aa).

Residue 150-157 (GGAGVGKT) participates in ATP binding.

Belongs to the ATPase alpha/beta chains family. F-type ATPases have 2 components, CF(1) - the catalytic core - and CF(0) - the membrane proton channel. CF(1) has five subunits: alpha(3), beta(3), gamma(1), delta(1), epsilon(1). CF(0) has three main subunits: a(1), b(2) and c(9-12). The alpha and beta chains form an alternating ring which encloses part of the gamma chain. CF(1) is attached to CF(0) by a central stalk formed by the gamma and epsilon chains, while a peripheral stalk is formed by the delta and b chains.

The protein localises to the cell inner membrane. It catalyses the reaction ATP + H2O + 4 H(+)(in) = ADP + phosphate + 5 H(+)(out). Produces ATP from ADP in the presence of a proton gradient across the membrane. The catalytic sites are hosted primarily by the beta subunits. This chain is ATP synthase subunit beta, found in Klebsiella pneumoniae subsp. pneumoniae (strain ATCC 700721 / MGH 78578).